Here is a 276-residue protein sequence, read N- to C-terminus: MATLEDKLLGEKLEYYCSSSEGEDNGDEGGDNKGASGKSRCSGLTIDTNPDATPAGGFRQQSSTNTGPKGVVKDWQRFKQLEAERRDETERQRLALAKKLTITATTSAEDEERKRQEELDAELDELMSEDFLQQYQKQRMAEMLRQTGHHQQFGQVQQLTSHEEFLACVEQENKHTTIIIHIYERQLAACATLNKCLDSLASDYPSIKFAKICSSVAGMSRDFRTKGLPALLVYKAQAVIGNFVRLTDDLSDDFFASDVESFLIEHGIIVDRALYN.

Residues Ser18, Ser19, Ser20, and Ser42 each carry the phosphoserine modification. The interval 18–74 (SSSEGEDNGDEGGDNKGASGKSRCSGLTIDTNPDATPAGGFRQQSSTNTGPKGVVKD) is disordered. In terms of domain architecture, Phosducin spans 62–272 (SSTNTGPKGV…LIEHGIIVDR (211 aa)). Positions 153–276 (FGQVQQLTSH…GIIVDRALYN (124 aa)) are thioredoxin fold.

It belongs to the phosducin family. As to quaternary structure, forms a complex with the beta and gamma subunits of the GTP-binding proteins. Interacts with the CCT chaperonin complex.

Functions as a co-chaperone for CCT in the assembly of heterotrimeric G protein complexes, facilitates the assembly of both Gbeta-Ggamma and RGS-Gbeta5 heterodimers. This Drosophila melanogaster (Fruit fly) protein is Phosducin-like protein 1.